Consider the following 435-residue polypeptide: GTPase Der (435 aa).

2 consecutive EngA-type G domains span residues 4–167 (PVVA…PAEK) and 175–350 (ISFS…DNQN). GTP-binding positions include 10–17 (GQPNVGKS), 57–61 (DTGGI), 119–122 (NKAD), 181–188 (GRPNVGKS), 228–232 (DTAGI), and 293–296 (NKWD). A KH-like domain is found at 351 to 435 (QRIQSSVLND…PIKILPRKRK (85 aa)).

Belongs to the TRAFAC class TrmE-Era-EngA-EngB-Septin-like GTPase superfamily. EngA (Der) GTPase family. In terms of assembly, associates with the 50S ribosomal subunit.

GTPase that plays an essential role in the late steps of ribosome biogenesis. The chain is GTPase Der from Lactobacillus helveticus (strain DPC 4571).